The chain runs to 255 residues: Triosephosphate isomerase (255 aa).

Asn-10 to Lys-12 is a substrate binding site. The active-site Electrophile is His-96. Glu-168 acts as the Proton acceptor in catalysis. Residues Gly-174, Ser-213, and Gly-234–Gly-235 contribute to the substrate site.

The protein belongs to the triosephosphate isomerase family. In terms of assembly, homodimer.

The protein resides in the cytoplasm. It catalyses the reaction D-glyceraldehyde 3-phosphate = dihydroxyacetone phosphate. It functions in the pathway carbohydrate biosynthesis; gluconeogenesis. It participates in carbohydrate degradation; glycolysis; D-glyceraldehyde 3-phosphate from glycerone phosphate: step 1/1. Its function is as follows. Involved in the gluconeogenesis. Catalyzes stereospecifically the conversion of dihydroxyacetone phosphate (DHAP) to D-glyceraldehyde-3-phosphate (G3P). This is Triosephosphate isomerase from Histophilus somni (strain 2336) (Haemophilus somnus).